We begin with the raw amino-acid sequence, 420 residues long: Gamma-glutamyl phosphate reductase (420 aa).

This sequence belongs to the gamma-glutamyl phosphate reductase family.

It is found in the cytoplasm. It carries out the reaction L-glutamate 5-semialdehyde + phosphate + NADP(+) = L-glutamyl 5-phosphate + NADPH + H(+). The protein operates within amino-acid biosynthesis; L-proline biosynthesis; L-glutamate 5-semialdehyde from L-glutamate: step 2/2. Its function is as follows. Catalyzes the NADPH-dependent reduction of L-glutamate 5-phosphate into L-glutamate 5-semialdehyde and phosphate. The product spontaneously undergoes cyclization to form 1-pyrroline-5-carboxylate. In Neisseria meningitidis serogroup A / serotype 4A (strain DSM 15465 / Z2491), this protein is Gamma-glutamyl phosphate reductase.